The primary structure comprises 104 residues: Small ribosomal subunit protein bS18c (104 aa).

The disordered stretch occupies residues 84-104 (DKQFERSESTPRTIGLRTRNK).

This sequence belongs to the bacterial ribosomal protein bS18 family. As to quaternary structure, part of the 30S ribosomal subunit.

It localises to the plastid. Its subcellular location is the chloroplast. This is Small ribosomal subunit protein bS18c from Cucumis sativus (Cucumber).